A 614-amino-acid polypeptide reads, in one-letter code: UvrABC system protein C (614 aa).

Positions 26 to 104 constitute a GIY-YIG domain; sequence NLPGVYKMLG…IKEYRPPYNV (79 aa). One can recognise a UVR domain in the interval 215 to 250; sequence SDIHTALIEKMEASAEELDFEKAVFYRDQLSMLREV.

The protein belongs to the UvrC family. As to quaternary structure, interacts with UvrB in an incision complex.

It localises to the cytoplasm. Its function is as follows. The UvrABC repair system catalyzes the recognition and processing of DNA lesions. UvrC both incises the 5' and 3' sides of the lesion. The N-terminal half is responsible for the 3' incision and the C-terminal half is responsible for the 5' incision. The polypeptide is UvrABC system protein C (Psychrobacter cryohalolentis (strain ATCC BAA-1226 / DSM 17306 / VKM B-2378 / K5)).